Consider the following 191-residue polypeptide: Somatotropin (191 aa).

Position 20 (His-20) interacts with Zn(2+). Cysteines 53 and 164 form a disulfide. Glu-173 is a binding site for Zn(2+). Cys-181 and Cys-189 are oxidised to a cystine.

The protein belongs to the somatotropin/prolactin family.

It is found in the secreted. Growth hormone plays an important role in growth control and is involved in the regulation of several anabolic processes. Implicated as an osmoregulatory substance important for seawater adaptation. In Chelonia mydas (Green sea-turtle), this protein is Somatotropin (GH).